We begin with the raw amino-acid sequence, 127 residues long: MPRIEGVDVPDDKRGEIALTDIYGVGQSRASEILEKAEVSVDKRPREWTESETKRVRRIIEEDYTVEGQLRTEVQMNIKRLKEIGCYRGKRHREGLPVNGQRTRTNARTRKGKRKTVAGRSQSTQKK.

The tract at residues lysine 90–lysine 127 is disordered. Residues threonine 105–valine 117 show a composition bias toward basic residues.

Belongs to the universal ribosomal protein uS13 family. In terms of assembly, part of the 30S ribosomal subunit. Forms a loose heterodimer with protein S19. Forms two bridges to the 50S subunit in the 70S ribosome.

In terms of biological role, located at the top of the head of the 30S subunit, it contacts several helices of the 16S rRNA. In the 70S ribosome it contacts the 23S rRNA (bridge B1a) and protein L5 of the 50S subunit (bridge B1b), connecting the 2 subunits; these bridges are implicated in subunit movement. Contacts the tRNAs in the A and P-sites. The protein is Small ribosomal subunit protein uS13 of Salinibacter ruber (strain DSM 13855 / M31).